A 508-amino-acid chain; its full sequence is Photosystem II CP47 reaction center protein (508 aa).

6 consecutive transmembrane segments (helical) span residues 21–36 (AVHI…WAGS), 101–115 (IVFS…IWHW), 140–156 (GIHL…FGAF), 203–218 (IAAG…FHLS), 237–252 (VLSS…AFVV), and 457–472 (TFAL…HGAR).

It belongs to the PsbB/PsbC family. PsbB subfamily. In terms of assembly, PSII is composed of 1 copy each of membrane proteins PsbA, PsbB, PsbC, PsbD, PsbE, PsbF, PsbH, PsbI, PsbJ, PsbK, PsbL, PsbM, PsbT, PsbX, PsbY, PsbZ, Psb30/Ycf12, at least 3 peripheral proteins of the oxygen-evolving complex and a large number of cofactors. It forms dimeric complexes. Binds multiple chlorophylls. PSII binds additional chlorophylls, carotenoids and specific lipids. serves as cofactor.

Its subcellular location is the plastid. The protein localises to the chloroplast thylakoid membrane. Functionally, one of the components of the core complex of photosystem II (PSII). It binds chlorophyll and helps catalyze the primary light-induced photochemical processes of PSII. PSII is a light-driven water:plastoquinone oxidoreductase, using light energy to abstract electrons from H(2)O, generating O(2) and a proton gradient subsequently used for ATP formation. The sequence is that of Photosystem II CP47 reaction center protein from Secale cereale (Rye).